Here is a 384-residue protein sequence, read N- to C-terminus: MKKTIYKCVLPLLICILLTGCWDRTEINDIAFVVSSAIDKKKDQYRVAMQIPLVGQLGGQTGGGGGTAGSKTWYVDSASGTTIREANNKLQTSLSRTINTSHRRTVIIGEDMARDGVAPVFDILTRNPQNRLTALILVSRGEARDILNTDVQLEQFPAEMIRELAIIATSRPVFLSRFMSDLVEIGSDPYAPVISASKTKPGGKGKSNLKIDGLAIFKKDRLMDIFKDEHMTAALMLLNQARQPEFIVDLPNQMGQASIQLQKSNASFHAAEKNGKLSMTIEIRAKGIIMENQSTYETRENDQYYIIQKALNRTIKKDVISTVHRLQKLKADPAGFQDRTIRSTATTKNLLKKEWEEVYKDMEVHVVPIVTIEQGGVLYKTISH.

The first 20 residues, 1–20 (MKKTIYKCVLPLLICILLTG), serve as a signal peptide directing secretion. Cysteine 21 carries the N-palmitoyl cysteine lipid modification. Cysteine 21 is lipidated: S-diacylglycerol cysteine.

Belongs to the GerABKC lipoprotein family.

Its subcellular location is the cell membrane. May be involved in spore germination. The chain is Putative spore germination protein YfkR (yfkR) from Bacillus subtilis (strain 168).